The chain runs to 165 residues: UPF0303 protein BamMC406_1480 (165 aa).

Belongs to the UPF0303 family.

This is UPF0303 protein BamMC406_1480 from Burkholderia ambifaria (strain MC40-6).